Consider the following 470-residue polypeptide: Cannabinoid receptor 1 (470 aa).

Over 1–121 (MKSILDGLAD…TPSQQLVIAA (121 aa)) the chain is Extracellular. Residues 2–23 (KSILDGLADTTFRTITTDLLYL) form a required for mitochondrial localization region. 2 N-linked (GlcNAc...) asparagine glycosylation sites follow: N78 and N84. The helical transmembrane segment at 122–142 (LSIILGTFTVLENMLVLVVIV) threads the bilayer. At 143-154 (QSRSLRCRPSYH) the chain is on the cytoplasmic side. The helical transmembrane segment at 155–175 (FIGSLAVADLLGSVIFVYSFV) threads the bilayer. At 176-187 (DFHVFHRKDSPN) the chain is on the extracellular side. A helical membrane pass occupies residues 188–208 (VFLFKLGGVTASFTASVGSLF). Over 209 to 232 (LTAIDRYISIHRPMSYKRIVTRTK) the chain is Cytoplasmic. Residues 233–253 (AVIAFCMMWTIAIVIAVLPLF) traverse the membrane as a helical segment. Over 254 to 277 (GWNCIKLRSVCSDIFPLIDETYLM) the chain is Extracellular. The chain crosses the membrane as a helical span at residues 278 to 298 (FWIGVTSVLLLFIVYAYMYIL). The Cytoplasmic portion of the chain corresponds to 299 to 344 (WKAHNHAVRMLQRGTQKSIIVHTSEDGKVHITRPDQTRMDIRLAKT). The helical transmembrane segment at 345 to 365 (LVLILVVLIICWGPLMAIMVY) threads the bilayer. The Extracellular portion of the chain corresponds to 366–377 (DVFGKINKTIKT). N372 is a glycosylation site (N-linked (GlcNAc...) asparagine). Residues 378–398 (VFAFCSVLCLLNSTVNPIIYA) traverse the membrane as a helical segment. Residues 399-470 (LRSKDLRNAF…VSTDTSAEAV (72 aa)) lie on the Cytoplasmic side of the membrane. C415 carries the S-palmitoyl cysteine lipid modification.

Belongs to the G-protein coupled receptor 1 family. Palmitoylation at Cys-415 is important for recruitment at both plasma membrane and lipid rafts and association with G protein alpha subunits. As to expression, expressed in neurons, especially in the olfactory bulbs, telencephalic pallium, and hypothalamus and also in the midbrain and hindbrain (in the mesencephalic tegmentum and dorsolateral rhombencephalon). Expressed also in the spinal cord.

It is found in the cell membrane. The protein resides in the mitochondrion outer membrane. The protein localises to the cell projection. It localises to the axon. Its subcellular location is the presynapse. Functionally, G-protein coupled receptor for cannabinoids. Mediates many cannabinoid-induced effects in the central nervous system (CNS), as well as in peripheral tissues. Regulates cellular respiration and energy production in response to cannabinoids. Signaling typically involves reduction in cyclic AMP. The protein is Cannabinoid receptor 1 (cnr1) of Xenopus laevis (African clawed frog).